The primary structure comprises 358 residues: Uptake hydrogenase small subunit (358 aa).

The signal sequence occupies residues 1 to 45 (MSDIETFYDVMRRQGITRRSFMKSVRSPQHVLGLGPSFVPKIGEA). [4Fe-4S] cluster-binding residues include cysteine 62, cysteine 65, cysteine 160, cysteine 194, histidine 232, cysteine 235, cysteine 260, and cysteine 266. [3Fe-4S] cluster contacts are provided by cysteine 275, cysteine 294, and cysteine 297.

Belongs to the [NiFe]/[NiFeSe] hydrogenase small subunit family. Heterodimer of a large and a small subunit. [4Fe-4S] cluster is required as a cofactor. The cofactor is [3Fe-4S] cluster.

The protein localises to the cell membrane. It catalyses the reaction H2 + A = AH2. Functionally, this enzyme recycles the H(2) produced by nitrogenase to increase the production of ATP and to protect nitrogenase against inhibition or damage by O(2) under carbon- or phosphate-limited conditions. The polypeptide is Uptake hydrogenase small subunit (hupA) (Rhodobacter capsulatus (Rhodopseudomonas capsulata)).